The chain runs to 148 residues: Coactosin (148 aa).

The 134-residue stretch at M1–K134 folds into the ADF-H domain. Residues D71–R76 carry the F-loop; important for stable binding to G-actin and F-actin motif. At S147 the chain carries Phosphoserine.

It belongs to the actin-binding proteins ADF family. Coactosin subfamily. In terms of assembly, interacts with 14-3-3 protein 3. Post-translationally, phosphorylation at Ser-147 appears not to affect its binding to actin; however, it may regulate phagocytosis and motility.

Its subcellular location is the cytoplasm. The protein localises to the cell projection. It is found in the phagocytic cup. It localises to the pseudopodium. The protein resides in the cell membrane. Its subcellular location is the cytoskeleton. Actin-binding protein which is involved in F-actin stabilization. May play a role during phagocytosis and pseudopod formation by contributing to the maintenance of F-actin. The polypeptide is Coactosin (Entamoeba histolytica (strain ATCC 30459 / HM-1:IMSS / ABRM)).